Here is a 400-residue protein sequence, read N- to C-terminus: Na(+)/H(+) antiporter NhaA (400 aa).

The next 11 helical transmembrane spans lie at 10–30 (FNLEASGGIVLALAAIAAMII), 60–80 (AHHWINDGLMAVFFFLVGLEL), 95–115 (IILPAGAALGGMIMPAIVYLF), 126–146 (GWAIPAATDIAFALGILSLLG), 155–175 (VFLVSIAIFDDIGAIIIIALF), 178–198 (NDLSLGSLAIAGLCLPFLYLL), 218–238 (VAVLKSGIHATLAGVVLALFI), 265–285 (GILPLFAFANAGISLKGAGFG), 295–315 (IAAGLFIGKQVGVMLMCWLIF), 334–354 (AALLCGVGFTMSLFIGGLAFA), and 364–384 (LGIIMGSIVSGIAGYMMLKAT).

Belongs to the NhaA Na(+)/H(+) (TC 2.A.33) antiporter family.

Its subcellular location is the cell inner membrane. The catalysed reaction is Na(+)(in) + 2 H(+)(out) = Na(+)(out) + 2 H(+)(in). In terms of biological role, na(+)/H(+) antiporter that extrudes sodium in exchange for external protons. This chain is Na(+)/H(+) antiporter NhaA, found in Psychrobacter cryohalolentis (strain ATCC BAA-1226 / DSM 17306 / VKM B-2378 / K5).